The sequence spans 293 residues: Elongation factor Ts (293 aa).

An involved in Mg(2+) ion dislocation from EF-Tu region spans residues 79 to 82; it reads TDFV.

Belongs to the EF-Ts family.

It is found in the cytoplasm. Associates with the EF-Tu.GDP complex and induces the exchange of GDP to GTP. It remains bound to the aminoacyl-tRNA.EF-Tu.GTP complex up to the GTP hydrolysis stage on the ribosome. The polypeptide is Elongation factor Ts (Exiguobacterium sibiricum (strain DSM 17290 / CCUG 55495 / CIP 109462 / JCM 13490 / 255-15)).